Consider the following 327-residue polypeptide: Tetraacyldisaccharide 4'-kinase (327 aa).

52–59 (TLGGAGKT) contacts ATP.

This sequence belongs to the LpxK family.

The enzyme catalyses a lipid A disaccharide + ATP = a lipid IVA + ADP + H(+). Its pathway is glycolipid biosynthesis; lipid IV(A) biosynthesis; lipid IV(A) from (3R)-3-hydroxytetradecanoyl-[acyl-carrier-protein] and UDP-N-acetyl-alpha-D-glucosamine: step 6/6. Transfers the gamma-phosphate of ATP to the 4'-position of a tetraacyldisaccharide 1-phosphate intermediate (termed DS-1-P) to form tetraacyldisaccharide 1,4'-bis-phosphate (lipid IVA). The sequence is that of Tetraacyldisaccharide 4'-kinase from Methylorubrum extorquens (strain CM4 / NCIMB 13688) (Methylobacterium extorquens).